A 152-amino-acid polypeptide reads, in one-letter code: MAKSKNHTTHNQSRKWHRNGIKKPRSQRYESLKGVDPKFLRNMRFAKKHNKKGLKKMQANNAKAMSARAEAVKALVKPKEIKPKMPTGGSRKLSRLAYIAHPKLGKRARARIAKGLRLCRPKSQAKASTKAKPPAAAAPAAKGAQAPTKAPE.

The span at 1-26 shows a compositional bias: basic residues; it reads MAKSKNHTTHNQSRKWHRNGIKKPRS. Positions 1-32 are disordered; that stretch reads MAKSKNHTTHNQSRKWHRNGIKKPRSQRYESL. Position 5 is an N6-methyllysine (lysine 5). Serine 31 carries the phosphoserine modification. Lysine 33 carries the N6-acetyllysine modification. The disordered stretch occupies residues 119–152; it reads CRPKSQAKASTKAKPPAAAAPAAKGAQAPTKAPE. Low complexity predominate over residues 121–152; that stretch reads PKSQAKASTKAKPPAAAAPAAKGAQAPTKAPE.

It belongs to the eukaryotic ribosomal protein eL29 family. Component of the large ribosomal subunit.

Its subcellular location is the cytoplasm. Its function is as follows. Component of the large ribosomal subunit. The ribosome is a large ribonucleoprotein complex responsible for the synthesis of proteins in the cell. This chain is Large ribosomal subunit protein eL29 (RPL29), found in Bos taurus (Bovine).